Here is an 862-residue protein sequence, read N- to C-terminus: DNA mismatch repair protein MutS (862 aa).

ATP is bound at residue G608 to S615.

Belongs to the DNA mismatch repair MutS family.

In terms of biological role, this protein is involved in the repair of mismatches in DNA. It is possible that it carries out the mismatch recognition step. This protein has a weak ATPase activity. In Borreliella afzelii (strain PKo) (Borrelia afzelii), this protein is DNA mismatch repair protein MutS.